Here is a 96-residue protein sequence, read N- to C-terminus: Citrate lyase acyl carrier protein (96 aa).

Serine 14 bears the O-(phosphoribosyl dephospho-coenzyme A)serine mark.

This sequence belongs to the CitD family. In terms of assembly, oligomer with a subunit composition of (alpha,beta,gamma)6.

The protein localises to the cytoplasm. Covalent carrier of the coenzyme of citrate lyase. This is Citrate lyase acyl carrier protein from Lactiplantibacillus plantarum (strain ATCC BAA-793 / NCIMB 8826 / WCFS1) (Lactobacillus plantarum).